We begin with the raw amino-acid sequence, 727 residues long: Putative E3 ubiquitin-protein ligase UNKL (727 aa).

A disordered region spans residues Met-1–Lys-21. 4 C3H1-type zinc fingers span residues Tyr-75–Thr-104, Tyr-115–Leu-145, Gln-243–Thr-277, and Ile-285–Lys-313. Residues Ser-330 to Gly-339 show a composition bias toward polar residues. Disordered stretches follow at residues Ser-330–Gln-360, Leu-446–Gly-514, and Ser-543–Ser-562. Over residues Ser-463–Ser-495 the composition is skewed to low complexity. The RING-type zinc finger occupies Cys-686 to Lys-721.

It belongs to the unkempt family. As to quaternary structure, interacts with the GTP-bound form of Rac1. Interacts with Baf60b/Smarcd2. Ubiquitination is enhanced by activated Rac1. The presence of the RING finger domain is not essential for ubiquitination to occur. As to expression, ubiquitous.

The protein localises to the cytoplasm. It is found in the nucleus. The protein operates within protein modification; protein ubiquitination. May participate in a protein complex showing an E3 ligase activity regulated by Rac1. Ubiquitination is directed towards itself and possibly other substrates, such as Baf60b/Smarcd2. Intrinsic E3 ligase activity has not been proven. The sequence is that of Putative E3 ubiquitin-protein ligase UNKL (Unkl) from Mus musculus (Mouse).